The chain runs to 243 residues: UPF0246 protein SEQ_2141 (243 aa).

Belongs to the UPF0246 family.

The protein is UPF0246 protein SEQ_2141 of Streptococcus equi subsp. equi (strain 4047).